The primary structure comprises 463 residues: L-seryl-tRNA(Sec) selenium transferase (463 aa).

Residue K295 is modified to N6-(pyridoxal phosphate)lysine.

This sequence belongs to the SelA family. In terms of assembly, homodecamer; pentamer of dimers. Binds only one seryl-tRNA(Sec) per dimer. It depends on pyridoxal 5'-phosphate as a cofactor.

Its subcellular location is the cytoplasm. It catalyses the reaction L-seryl-tRNA(Sec) + selenophosphate + H(+) = L-selenocysteinyl-tRNA(Sec) + phosphate. It functions in the pathway aminoacyl-tRNA biosynthesis; selenocysteinyl-tRNA(Sec) biosynthesis; selenocysteinyl-tRNA(Sec) from L-seryl-tRNA(Sec) (bacterial route): step 1/1. Converts seryl-tRNA(Sec) to selenocysteinyl-tRNA(Sec) required for selenoprotein biosynthesis. This Salmonella paratyphi A (strain AKU_12601) protein is L-seryl-tRNA(Sec) selenium transferase.